Consider the following 220-residue polypeptide: Ribose-5-phosphate isomerase A (220 aa).

Residues 28 to 31 (TGST), 81 to 84 (DGAD), and 94 to 97 (KGGG) contribute to the substrate site. The Proton acceptor role is filled by Glu-103. Lys-121 provides a ligand contact to substrate.

The protein belongs to the ribose 5-phosphate isomerase family. Homodimer.

It catalyses the reaction aldehydo-D-ribose 5-phosphate = D-ribulose 5-phosphate. Its pathway is carbohydrate degradation; pentose phosphate pathway; D-ribose 5-phosphate from D-ribulose 5-phosphate (non-oxidative stage): step 1/1. Functionally, catalyzes the reversible conversion of ribose-5-phosphate to ribulose 5-phosphate. This chain is Ribose-5-phosphate isomerase A, found in Aromatoleum aromaticum (strain DSM 19018 / LMG 30748 / EbN1) (Azoarcus sp. (strain EbN1)).